A 369-amino-acid polypeptide reads, in one-letter code: Chaperone protein DnaJ (369 aa).

The J domain occupies 3–67 (DHYEVLGVER…QQRQQYDRGG (65 aa)). A CR-type zinc finger spans residues 123–205 (GAHRDLEVDT…CQGQGRVRAR (83 aa)). Cysteine 136, cysteine 139, cysteine 153, cysteine 156, cysteine 179, cysteine 182, cysteine 193, and cysteine 196 together coordinate Zn(2+). CXXCXGXG motif repeat units follow at residues 136 to 143 (CETCDGSC), 153 to 160 (CDICHGTG), 179 to 186 (CGSCRGYG), and 193 to 200 (CVTCQGQG).

It belongs to the DnaJ family. Homodimer. The cofactor is Zn(2+).

It is found in the cytoplasm. Its function is as follows. Participates actively in the response to hyperosmotic and heat shock by preventing the aggregation of stress-denatured proteins and by disaggregating proteins, also in an autonomous, DnaK-independent fashion. Unfolded proteins bind initially to DnaJ; upon interaction with the DnaJ-bound protein, DnaK hydrolyzes its bound ATP, resulting in the formation of a stable complex. GrpE releases ADP from DnaK; ATP binding to DnaK triggers the release of the substrate protein, thus completing the reaction cycle. Several rounds of ATP-dependent interactions between DnaJ, DnaK and GrpE are required for fully efficient folding. Also involved, together with DnaK and GrpE, in the DNA replication of plasmids through activation of initiation proteins. The protein is Chaperone protein DnaJ of Leifsonia xyli subsp. xyli (strain CTCB07).